Here is a 100-residue protein sequence, read N- to C-terminus: MKGATVTRADLCEAVHEQVGLTRQDCAELVERVLELMCQALERGEQVKLSGFGVFQVRSKRARMGRNPKTGEPAAIEPRRVIGFRASQVMKARVDQALSR.

Belongs to the bacterial histone-like protein family. In terms of assembly, heterodimer of an alpha and a beta chain.

In terms of biological role, this protein is one of the two subunits of integration host factor, a specific DNA-binding protein that functions in genetic recombination as well as in transcriptional and translational control. The polypeptide is Integration host factor subunit alpha (Phenylobacterium zucineum (strain HLK1)).